An 869-amino-acid polypeptide reads, in one-letter code: Bifunctional uridylyltransferase/uridylyl-removing enzyme (869 aa).

Residues 1–332 form a uridylyltransferase region; the sequence is MTATPADRPD…QFDGEAVPVQ (332 aa). The uridylyl-removing stretch occupies residues 333-691; the sequence is LDAGFSLRRG…RRAVPDNDAL (359 aa). The 123-residue stretch at 450–572 folds into the HD domain; that stretch reads VDQHTLMVLR…VGTRERLDYL (123 aa). ACT domains lie at 692–771 and 798–869; these read EVFV…PSRR and RISL…LDPT.

The protein belongs to the GlnD family. Requires Mg(2+) as cofactor.

It catalyses the reaction [protein-PII]-L-tyrosine + UTP = [protein-PII]-uridylyl-L-tyrosine + diphosphate. The catalysed reaction is [protein-PII]-uridylyl-L-tyrosine + H2O = [protein-PII]-L-tyrosine + UMP + H(+). With respect to regulation, uridylyltransferase (UTase) activity is inhibited by glutamine, while glutamine activates uridylyl-removing (UR) activity. In terms of biological role, modifies, by uridylylation and deuridylylation, the PII regulatory proteins (GlnB and homologs), in response to the nitrogen status of the cell that GlnD senses through the glutamine level. Under low glutamine levels, catalyzes the conversion of the PII proteins and UTP to PII-UMP and PPi, while under higher glutamine levels, GlnD hydrolyzes PII-UMP to PII and UMP (deuridylylation). Thus, controls uridylylation state and activity of the PII proteins, and plays an important role in the regulation of nitrogen assimilation and metabolism. This Xanthomonas campestris pv. campestris (strain B100) protein is Bifunctional uridylyltransferase/uridylyl-removing enzyme.